Consider the following 308-residue polypeptide: Elongation factor Ts (308 aa).

Residues 80 to 83 (TDFV) form an involved in Mg(2+) ion dislocation from EF-Tu region.

It belongs to the EF-Ts family.

It localises to the cytoplasm. Functionally, associates with the EF-Tu.GDP complex and induces the exchange of GDP to GTP. It remains bound to the aminoacyl-tRNA.EF-Tu.GTP complex up to the GTP hydrolysis stage on the ribosome. This Rhizobium leguminosarum bv. trifolii (strain WSM2304) protein is Elongation factor Ts.